We begin with the raw amino-acid sequence, 963 residues long: MERREEQPGAAGAGAAPALDFTVESVEKALHQLYYDPNIENKNLAQKWLMQAQVSPQAWHFSWQLLQPDKVPEIQYFGASALPIKTSRYWSDIPTDQYESLKAQLFTQITRFASGSKIVLTRLCVALASLALSMMPDAWPCAVADMVRLFQAEDSPVDGQGRCLALLELLTVLPEEFQTSRLPQYRKGLVRTSLAVECGAVFPLLEQLLQQPSSPSCVRQKVLKCFSSWVQLEVPLQDCEALIQAAFAALQDSELFDSSVEAIVNAISQPDAQRCVNTLLKLIPLVLGLQEQLRQAVQNGDMETSHGICRIAVALGENHSRALLDQVEHWQSFLALVNMIMFCTGIPGHYPVNETTSSLTLTFWYTLQDDILSFEAEKQAVYQQVYRPVYFQLVDVLLHKAQFPSDEEYGFWSSDEKEQFRIYRVDISDTLMYVYEMLGAELLSNLYDKLGRLLTSSEEPYSWQHTEALLYGFQSIAETIDVNYSDVVPGLIGLIPRISISNVQLADTVMFTIGALSEWLADHPVMINSVLPLVLHALGNPEPSVSSVSTLKKICRECKYDLPPYAANIVAVSQDVLMKQIHKTSQCMWLMQALGFLLSALQVEEILKNLHSLISPYIQQLEKLAEEIPNPSNKLAIVHILGLLSNLFTTLDISHHEDDHEGPELRKLPVPQGPNPVVVVLQQVFQLIQKVLSKWLNDAQVVEAVCAIFEKSVKTLLDDFAPMVPQLCEMLGRMYSTIPQASALDLTRQLVHIFAHEPAHFPPIEALFLLVTSVTLTLFQQGPRDHPDIVDSFMQLLAQALKRKPDLFLCERLDVKAVFQCAVLALKFPEAPTVKASCGFFTELLPRCGEVESVGKVVQEDGRMLLIAVLEAIGGQASRSLMDCFADILFALNKHCFSLLSMWIKEALQPPGFPSARLSPEQKDTFSQQILRERVNKRRVKEMVKEFTLLCRGLHGTDYTADY.

20 HEAT repeats span residues 24-54, 56-88, 95-135, 142-179, 194-231, 236-268, 276-325, 330-372, 375-438, 440-476, 487-522, 524-558, 562-600, 603-648, 676-716, 720-754, 761-803, 815-845, 860-893, and 897-931; these read ESVEKALHQLYYDPNIENKNLAQKWLMQAQV, PQAWHFSWQLLQPDKVPEIQYFGASALPIKTSR, TDQY…LSMM, AVADMVRLFQAEDSPVDGQGRCLALLELLTVLPEEFQT, LAVECGAVFPLLEQLLQQPSSPSCVRQKVLKCFSSWVQ, LQDCEALIQAAFAALQDSELFDSSVEAIVNAIS, VNTL…ALLD, WQSF…DDIL, EAEK…YEML, AELLSNLYDKLGRLLTSSEEPYSWQHTEALLYGFQSI, VVPGLIGLIPRISISNVQLADTVMFTIGALSEWLAD, PVMINSVLPLVLHALGNPEPSVSSVSTLKKICREC, LPPYAANIVAVSQDVLMKQIHKTSQCMWLMQALGFLLSA, VEEI…SNLF, PVVV…VKTL, FAPMVPQLCEMLGRMYSTIPQASALDLTRQLVHIF, FPPI…ALKR, VKAVFQCAVLALKFPEAPTVKASCGFFTELL, EDGRMLLIAVLEAIGGQASRSLMDCFADILFALN, and FSLLSMWIKEALQPPGFPSARLSPEQKDTFSQQIL. The Importin N-terminal domain occupies 45–111; that stretch reads AQKWLMQAQV…KAQLFTQITR (67 aa).

The protein belongs to the importin beta family. As to quaternary structure, interacts with UBC9, RAN, RBM8A, eIF-1A and PAX6.

It is found in the cytoplasm. Its subcellular location is the nucleus. Functions in nuclear protein import as nuclear transport receptor. Serves as receptor for nuclear localization signals (NLS) in cargo substrates. Is thought to mediate docking of the importin/substrate complex to the nuclear pore complex (NPC) through binding to nucleoporin and the complex is subsequently translocated through the pore by an energy requiring, Ran-dependent mechanism. At the nucleoplasmic side of the NPC, Ran binds to the importin, the importin/substrate complex dissociates and importin is re-exported from the nucleus to the cytoplasm where GTP hydrolysis releases Ran. The directionality of nuclear import is thought to be conferred by an asymmetric distribution of the GTP- and GDP-bound forms of Ran between the cytoplasm and nucleus. Mediates the nuclear import of UBC9, the RBM8A/MAGOH complex, PAX6 and probably other members of the paired homeobox family. Also mediates nuclear export of eIF-1A, and the cytoplasmic release of eIF-1A is triggered by the loading of import substrates onto IPO13. This chain is Importin-13 (IPO13), found in Pongo abelii (Sumatran orangutan).